Consider the following 94-residue polypeptide: Protein RnfH (94 aa).

This sequence belongs to the UPF0125 (RnfH) family.

This is Protein RnfH from Yersinia pestis bv. Antiqua (strain Antiqua).